We begin with the raw amino-acid sequence, 99 residues long: uncharacterized protein (99 aa).

The protein localises to the host cytoplasm. This is an uncharacterized protein from Escherichia phage Mu (Bacteriophage Mu).